The primary structure comprises 79 residues: Acyl carrier protein (79 aa).

Residues 2–77 (SDIEARVKKI…NAIDYANTHQ (76 aa)) form the Carrier domain. Ser-37 is subject to O-(pantetheine 4'-phosphoryl)serine.

This sequence belongs to the acyl carrier protein (ACP) family. In terms of processing, 4'-phosphopantetheine is transferred from CoA to a specific serine of apo-ACP by AcpS. This modification is essential for activity because fatty acids are bound in thioester linkage to the sulfhydryl of the prosthetic group.

The protein localises to the cytoplasm. The protein operates within lipid metabolism; fatty acid biosynthesis. Carrier of the growing fatty acid chain in fatty acid biosynthesis. The sequence is that of Acyl carrier protein from Paracidovorax citrulli (strain AAC00-1) (Acidovorax citrulli).